Consider the following 267-residue polypeptide: Indole-3-glycerol phosphate synthase (267 aa).

Belongs to the TrpC family.

It catalyses the reaction 1-(2-carboxyphenylamino)-1-deoxy-D-ribulose 5-phosphate + H(+) = (1S,2R)-1-C-(indol-3-yl)glycerol 3-phosphate + CO2 + H2O. The protein operates within amino-acid biosynthesis; L-tryptophan biosynthesis; L-tryptophan from chorismate: step 4/5. This is Indole-3-glycerol phosphate synthase from Cupriavidus pinatubonensis (strain JMP 134 / LMG 1197) (Cupriavidus necator (strain JMP 134)).